The primary structure comprises 356 residues: Adenine deaminase (356 aa).

Positions 23, 25, and 211 each coordinate Zn(2+). Glutamate 214 (proton donor) is an active-site residue. Aspartate 292 contacts Zn(2+). Aspartate 293 is a binding site for substrate.

This sequence belongs to the metallo-dependent hydrolases superfamily. Adenosine and AMP deaminases family. Adenine deaminase type 2 subfamily. Zn(2+) is required as a cofactor.

It is found in the cytoplasm. The protein resides in the nucleus. It catalyses the reaction adenine + H2O + H(+) = hypoxanthine + NH4(+). In terms of biological role, catalyzes the hydrolytic deamination of adenine to hypoxanthine. Plays an important role in the purine salvage pathway and in nitrogen catabolism. The polypeptide is Adenine deaminase (Candida albicans (strain SC5314 / ATCC MYA-2876) (Yeast)).